An 86-amino-acid chain; its full sequence is Cytochrome c oxidase subunit 3 (86 aa).

The Mitochondrial matrix segment spans residues 1–15; that stretch reads MAHQAHSYHMVDPSP. A helical transmembrane segment spans residues 16–34; that stretch reads WPIFGAAAALLTTSGLVMW. The Mitochondrial intermembrane portion of the chain corresponds to 35-40; the sequence is FHYNSS. The chain crosses the membrane as a helical span at residues 41-66; sequence ILLAAGLLSMLLVMLQWWREIVREST. Residues 67-86 lie on the Mitochondrial matrix side of the membrane; sequence FQGHHTPTVQKGLRYGMILF.

Belongs to the cytochrome c oxidase subunit 3 family. As to quaternary structure, component of the cytochrome c oxidase (complex IV, CIV), a multisubunit enzyme composed of 14 subunits. The complex is composed of a catalytic core of 3 subunits MT-CO1, MT-CO2 and MT-CO3, encoded in the mitochondrial DNA, and 11 supernumerary subunits COX4I, COX5A, COX5B, COX6A, COX6B, COX6C, COX7A, COX7B, COX7C, COX8 and NDUFA4, which are encoded in the nuclear genome. The complex exists as a monomer or a dimer and forms supercomplexes (SCs) in the inner mitochondrial membrane with NADH-ubiquinone oxidoreductase (complex I, CI) and ubiquinol-cytochrome c oxidoreductase (cytochrome b-c1 complex, complex III, CIII), resulting in different assemblies (supercomplex SCI(1)III(2)IV(1) and megacomplex MCI(2)III(2)IV(2)).

The protein localises to the mitochondrion inner membrane. It carries out the reaction 4 Fe(II)-[cytochrome c] + O2 + 8 H(+)(in) = 4 Fe(III)-[cytochrome c] + 2 H2O + 4 H(+)(out). Its function is as follows. Component of the cytochrome c oxidase, the last enzyme in the mitochondrial electron transport chain which drives oxidative phosphorylation. The respiratory chain contains 3 multisubunit complexes succinate dehydrogenase (complex II, CII), ubiquinol-cytochrome c oxidoreductase (cytochrome b-c1 complex, complex III, CIII) and cytochrome c oxidase (complex IV, CIV), that cooperate to transfer electrons derived from NADH and succinate to molecular oxygen, creating an electrochemical gradient over the inner membrane that drives transmembrane transport and the ATP synthase. Cytochrome c oxidase is the component of the respiratory chain that catalyzes the reduction of oxygen to water. Electrons originating from reduced cytochrome c in the intermembrane space (IMS) are transferred via the dinuclear copper A center (CU(A)) of subunit 2 and heme A of subunit 1 to the active site in subunit 1, a binuclear center (BNC) formed by heme A3 and copper B (CU(B)). The BNC reduces molecular oxygen to 2 water molecules using 4 electrons from cytochrome c in the IMS and 4 protons from the mitochondrial matrix. The polypeptide is Cytochrome c oxidase subunit 3 (MT-CO3) (Anas platyrhynchos (Mallard)).